The sequence spans 510 residues: Maturase K (510 aa).

The protein belongs to the intron maturase 2 family. MatK subfamily.

Its subcellular location is the plastid. The protein localises to the chloroplast. Usually encoded in the trnK tRNA gene intron. Probably assists in splicing its own and other chloroplast group II introns. This is Maturase K from Anomochloa marantoidea (Herbaceous bamboo).